We begin with the raw amino-acid sequence, 218 residues long: Holliday junction branch migration complex subunit RuvA (218 aa).

A domain I region spans residues 1-64 (MIGKITGRLE…EDVMQLFGFT (64 aa)). The tract at residues 65–143 (TLTEKEWHRL…SVMGMSDTQA (79 aa)) is domain II. A flexible linker region spans residues 144 to 164 (TVAAQSSDAVIETRAAPSPVV). Residues 165-218 (QNPSAQAEALSALSNLGYAPGDAAAAVAQAAGELPDAETPDLIRAALKRLAPKG) are domain III.

This sequence belongs to the RuvA family. In terms of assembly, homotetramer. Forms an RuvA(8)-RuvB(12)-Holliday junction (HJ) complex. HJ DNA is sandwiched between 2 RuvA tetramers; dsDNA enters through RuvA and exits via RuvB. An RuvB hexamer assembles on each DNA strand where it exits the tetramer. Each RuvB hexamer is contacted by two RuvA subunits (via domain III) on 2 adjacent RuvB subunits; this complex drives branch migration. In the full resolvosome a probable DNA-RuvA(4)-RuvB(12)-RuvC(2) complex forms which resolves the HJ.

The protein localises to the cytoplasm. The RuvA-RuvB-RuvC complex processes Holliday junction (HJ) DNA during genetic recombination and DNA repair, while the RuvA-RuvB complex plays an important role in the rescue of blocked DNA replication forks via replication fork reversal (RFR). RuvA specifically binds to HJ cruciform DNA, conferring on it an open structure. The RuvB hexamer acts as an ATP-dependent pump, pulling dsDNA into and through the RuvAB complex. HJ branch migration allows RuvC to scan DNA until it finds its consensus sequence, where it cleaves and resolves the cruciform DNA. The protein is Holliday junction branch migration complex subunit RuvA of Roseobacter denitrificans (strain ATCC 33942 / OCh 114) (Erythrobacter sp. (strain OCh 114)).